The following is an 89-amino-acid chain: Small ribosomal subunit protein uS15 (89 aa).

This sequence belongs to the universal ribosomal protein uS15 family. Part of the 30S ribosomal subunit. Forms a bridge to the 50S subunit in the 70S ribosome, contacting the 23S rRNA.

In terms of biological role, one of the primary rRNA binding proteins, it binds directly to 16S rRNA where it helps nucleate assembly of the platform of the 30S subunit by binding and bridging several RNA helices of the 16S rRNA. Its function is as follows. Forms an intersubunit bridge (bridge B4) with the 23S rRNA of the 50S subunit in the ribosome. The chain is Small ribosomal subunit protein uS15 from Thermomicrobium roseum (strain ATCC 27502 / DSM 5159 / P-2).